Here is a 1104-residue protein sequence, read N- to C-terminus: Transposon Ty4-P Gag-Pol polyprotein (1104 aa).

Positions V48–N112 form a coiled coil. The ty4 protease stretch occupies residues Q381–Y501. The active-site For protease activity; shared with dimeric partner is D414. The segment at A539–C599 is integrase-type zinc finger-like. The 168-residue stretch at T619–P786 folds into the Integrase catalytic domain. Mg(2+) contacts are provided by D630 and D695.

In terms of assembly, the protease is a homodimer, whose active site consists of two apposed aspartic acid residues. Post-translationally, proteolytically processed into capsid protein (CA), Ty4 protease (PR), integrase (IN) and reverse transcriptase/ribonuclease H (RT) proteins. Initially, virus-like particles (VLPs) are composed of the structural unprocessed proteins Gag and Gag-Pol, and also contain the host initiator methionine tRNA (tRNA(i)-Met) which serves as a primer for minus-strand DNA synthesis, and a dimer of genomic Ty RNA. Processing of the polyproteins occurs within the particle and proceeds by an ordered pathway, called maturation. First, the protease (PR) is released by autocatalytic cleavage of the Gag-Pol polyprotein, and this cleavage is a prerequisite for subsequent processing at the remaining sites to release the mature structural and catalytic proteins. Maturation takes place prior to the RT reaction and is required to produce transposition-competent VLPs.

The protein resides in the cytoplasm. It localises to the nucleus. The enzyme catalyses DNA(n) + a 2'-deoxyribonucleoside 5'-triphosphate = DNA(n+1) + diphosphate. The catalysed reaction is Endonucleolytic cleavage to 5'-phosphomonoester.. Its function is as follows. Capsid protein (CA) is the structural component of the virus-like particle (VLP), forming the shell that encapsulates the retrotransposons dimeric RNA genome. Functionally, the aspartyl protease (PR) mediates the proteolytic cleavages of the Gag and Gag-Pol polyproteins after assembly of the VLP. In terms of biological role, reverse transcriptase/ribonuclease H (RT) is a multifunctional enzyme that catalyzes the conversion of the retro-elements RNA genome into dsDNA within the VLP. The enzyme displays a DNA polymerase activity that can copy either DNA or RNA templates, and a ribonuclease H (RNase H) activity that cleaves the RNA strand of RNA-DNA heteroduplexes during plus-strand synthesis and hydrolyzes RNA primers. The conversion leads to a linear dsDNA copy of the retrotransposon that includes long terminal repeats (LTRs) at both ends. Integrase (IN) targets the VLP to the nucleus, where a subparticle preintegration complex (PIC) containing at least integrase and the newly synthesized dsDNA copy of the retrotransposon must transit the nuclear membrane. Once in the nucleus, integrase performs the integration of the dsDNA into the host genome. In Saccharomyces cerevisiae (strain ATCC 204508 / S288c) (Baker's yeast), this protein is Transposon Ty4-P Gag-Pol polyprotein (TY4B-P).